The following is a 130-amino-acid chain: Small ribosomal subunit protein uS9 (130 aa).

This sequence belongs to the universal ribosomal protein uS9 family.

This chain is Small ribosomal subunit protein uS9, found in Streptococcus pyogenes serotype M1.